The following is a 440-amino-acid chain: UDP-N-acetylmuramoylalanine--D-glutamate ligase (440 aa).

112-118 serves as a coordination point for ATP; it reads GSNGKST.

The protein belongs to the MurCDEF family.

Its subcellular location is the cytoplasm. It carries out the reaction UDP-N-acetyl-alpha-D-muramoyl-L-alanine + D-glutamate + ATP = UDP-N-acetyl-alpha-D-muramoyl-L-alanyl-D-glutamate + ADP + phosphate + H(+). The protein operates within cell wall biogenesis; peptidoglycan biosynthesis. Functionally, cell wall formation. Catalyzes the addition of glutamate to the nucleotide precursor UDP-N-acetylmuramoyl-L-alanine (UMA). This Blochmanniella pennsylvanica (strain BPEN) protein is UDP-N-acetylmuramoylalanine--D-glutamate ligase.